Reading from the N-terminus, the 734-residue chain is DNA replication licensing factor MCM5 (734 aa).

An N-acetylserine modification is found at Ser2. The region spanning 331-537 is the MCM domain; sequence IYELISKSIA…RDVMLAKHVI (207 aa). Position 371 (Arg371) interacts with ADP. Residues Lys392 and Lys396 each carry the N6-acetyllysine modification. The short motif at 512–515 is the Arginine finger element; the sequence is SRFD. Ser605 carries the phosphoserine modification.

The protein belongs to the MCM family. As to quaternary structure, component of the MCM2-7 complex. The complex forms a toroidal hexameric ring with the proposed subunit order MCM2-MCM6-MCM4-MCM7-MCM3-MCM5. Component of the CMG helicase complex, a hexameric ring of related MCM2-7 subunits stabilized by CDC45 and the tetrameric GINS complex. Interacts with ANKRD17. Interacts with MCMBP. Interacts with TONSL; the interaction is direct.

Its subcellular location is the nucleus. The protein resides in the chromosome. It localises to the cytoplasm. It is found in the cytosol. It catalyses the reaction ATP + H2O = ADP + phosphate + H(+). In terms of biological role, acts as a component of the MCM2-7 complex (MCM complex) which is the replicative helicase essential for 'once per cell cycle' DNA replication initiation and elongation in eukaryotic cells. Core component of CDC45-MCM-GINS (CMG) helicase, the molecular machine that unwinds template DNA during replication, and around which the replisome is built. The active ATPase sites in the MCM2-7 ring are formed through the interaction surfaces of two neighboring subunits such that a critical structure of a conserved arginine finger motif is provided in trans relative to the ATP-binding site of the Walker A box of the adjacent subunit. The six ATPase active sites, however, are likely to contribute differentially to the complex helicase activity. This is DNA replication licensing factor MCM5 from Bos taurus (Bovine).